Consider the following 208-residue polypeptide: Transcription factor atf-4 homolog (208 aa).

2 disordered regions span residues 18 to 47 (HNQTHSTPQYHNHHHHHHQSPTYPQSYFNP) and 106 to 165 (ERRS…EKEE). Positions 110–120 (NSSASPASNWS) are enriched in low complexity. The span at 121-141 (SDEHDSQSEKSYHPYKTPEKK) shows a compositional bias: basic and acidic residues. Residues 138–201 (PEKKERKKAQ…RYFKKFMTEM (64 aa)) enclose the bZIP domain. The tract at residues 140–163 (KKERKKAQNRLAATRYREKKRREK) is basic motif. The interval 173–187 (LSVTNGKLKDQVSEL) is leucine-zipper.

It belongs to the bZIP family.

The protein resides in the nucleus. Transcription factor. Involved in positively modulating longevity and stress tolerance, probably acting by positively regulating expression of transsulfuration enzyme cth-2, leading to increased hydrogen sulfide production and therefore increased protein persulfidation, a protective modification of redox-reactive cysteines. May mediate longevity and increased stress resistance induced by mTORC1 suppression. This chain is Transcription factor atf-4 homolog, found in Caenorhabditis elegans.